The sequence spans 115 residues: Large ribosomal subunit protein bL20 (115 aa).

The protein belongs to the bacterial ribosomal protein bL20 family.

In terms of biological role, binds directly to 23S ribosomal RNA and is necessary for the in vitro assembly process of the 50S ribosomal subunit. It is not involved in the protein synthesizing functions of that subunit. This chain is Large ribosomal subunit protein bL20, found in Synechococcus sp. (strain WH7803).